The chain runs to 428 residues: Methyl-branched lipid omega-hydroxylase (428 aa).

Cysteine 379 contacts heme.

This sequence belongs to the cytochrome P450 family. The cofactor is heme.

The catalysed reaction is a methyl-branched lipid + O2 + 2 reduced ferredoxin [iron-sulfur] cluster + 2 H(+) = an omega-hydroxy-methyl-branched lipid + H2O + 2 oxidized ferredoxin [iron-sulfur] cluster.. It carries out the reaction cholest-4-en-3-one + 6 reduced [2Fe-2S]-[ferredoxin] + 3 O2 + 5 H(+) = (25R)-3-oxocholest-4-en-26-oate + 6 oxidized [2Fe-2S]-[ferredoxin] + 4 H2O. It functions in the pathway lipid metabolism; branched-chain fatty acid metabolism. In terms of biological role, primarily hydroxylates the omega-carbon of a number of methyl-branched lipids, including (2E,6E)-farnesol, phytanate, geranylgeraniol, 15-methylpalmitate and (2E,6E)-farnesyl diphosphate. Also catalyzes the sequential oxidation of the terminal methyl of cholest-4-en-3-one into (25R)-26-hydroxycholest-4-en-3-one (alcohol), (25R)-26-oxocholest-4-en-3-one (aldehyde), to finally yield the carboxylic acid (25R)-3-oxocholest-4-en-26-oate. Also able to sequentially oxidize cholesterol itself, not only cholest-4-en-3-one. The sequence is that of Methyl-branched lipid omega-hydroxylase (cyp124) from Mycobacterium tuberculosis (strain CDC 1551 / Oshkosh).